Here is a 94-residue protein sequence, read N- to C-terminus: Gibberellin-regulated protein 11 (94 aa).

The first 23 residues, 1–23 (MAVFRVLLASLLISLLVLDFVHA), serve as a signal peptide directing secretion.

It belongs to the GASA family. In terms of processing, six disulfide bonds may be present.

Its subcellular location is the secreted. Its function is as follows. Gibberellin-regulated protein that may function in hormonal controlled steps of development such as seed germination, flowering and seed maturation. This chain is Gibberellin-regulated protein 11 (GASA11), found in Arabidopsis thaliana (Mouse-ear cress).